Here is a 236-residue protein sequence, read N- to C-terminus: Purine nucleoside phosphorylase DeoD-type 2 (236 aa).

An a purine D-ribonucleoside-binding site is contributed by His5. Residues Gly21, Arg25, Arg44, and 88 to 91 (RVGS) each bind phosphate. A purine D-ribonucleoside contacts are provided by residues 180–182 (DME) and 204–205 (SD). The Proton donor role is filled by Asp205.

The protein belongs to the PNP/UDP phosphorylase family. As to quaternary structure, homohexamer; trimer of homodimers.

The catalysed reaction is a purine D-ribonucleoside + phosphate = a purine nucleobase + alpha-D-ribose 1-phosphate. It carries out the reaction a purine 2'-deoxy-D-ribonucleoside + phosphate = a purine nucleobase + 2-deoxy-alpha-D-ribose 1-phosphate. In terms of biological role, catalyzes the reversible phosphorolytic breakdown of the N-glycosidic bond in the beta-(deoxy)ribonucleoside molecules, with the formation of the corresponding free purine bases and pentose-1-phosphate. In Vibrio vulnificus (strain CMCP6), this protein is Purine nucleoside phosphorylase DeoD-type 2.